Here is a 126-residue protein sequence, read N- to C-terminus: uncharacterized protein (126 aa).

Residues 48 to 68 (ILCMFPWQCVVYVFSNFVWLV) traverse the membrane as a helical segment.

Its subcellular location is the membrane. This is an uncharacterized protein from Homo sapiens (Human).